A 748-amino-acid polypeptide reads, in one-letter code: Peptidyl serine alpha-galactosyltransferase (748 aa).

Residues methionine 1–alanine 26 form the signal peptide. The Extracellular portion of the chain corresponds to glutamate 27 to arginine 710. Asparagine 33, asparagine 184, and asparagine 297 each carry an N-linked (GlcNAc...) asparagine glycan. Residues cysteine 415–cysteine 449 form the ShKT domain. Intrachain disulfides connect cysteine 415–cysteine 449, cysteine 422–cysteine 442, and cysteine 431–cysteine 446. 2 disordered regions span residues glutamate 474–lysine 576 and glutamate 611–isoleucine 670. The segment covering serine 531–lysine 565 has biased composition (pro residues). The segment covering glutamate 611 to leucine 637 has biased composition (basic and acidic residues). A helical membrane pass occupies residues leucine 711 to valine 731. Topologically, residues proline 732 to glutamate 748 are cytoplasmic.

Requires Mn(2+) as cofactor.

The protein resides in the membrane. Its function is as follows. Glycosyltransferase involved in the O-galactosylation of several proteins including extensins. Catalyzes the transfer of alpha-galactosyl to Ser residues. Hydroxylation of proline residues adjacent to the serine acceptor is required for activity. Utilizes selectively UDP-galactose as a donor nucleotide sugar. This is Peptidyl serine alpha-galactosyltransferase from Chlamydomonas reinhardtii (Chlamydomonas smithii).